Consider the following 249-residue polypeptide: ATP synthase subunit a (249 aa).

The next 6 membrane-spanning stretches (helical) occupy residues 26–46 (FTNV…FLYL), 84–104 (FFPF…IGLF), 114–134 (IIVT…YGFF), 143–163 (LFVP…IEII), 185–205 (ITLK…ALGI), and 208–228 (TVLP…VAFL).

It belongs to the ATPase A chain family. In terms of assembly, F-type ATPases have 2 components, CF(1) - the catalytic core - and CF(0) - the membrane proton channel. CF(1) has five subunits: alpha(3), beta(3), gamma(1), delta(1), epsilon(1). CF(0) has three main subunits: a(1), b(2) and c(9-12). The alpha and beta chains form an alternating ring which encloses part of the gamma chain. CF(1) is attached to CF(0) by a central stalk formed by the gamma and epsilon chains, while a peripheral stalk is formed by the delta and b chains.

The protein resides in the cell inner membrane. Its function is as follows. Key component of the proton channel; it plays a direct role in the translocation of protons across the membrane. The chain is ATP synthase subunit a from Brucella ovis (strain ATCC 25840 / 63/290 / NCTC 10512).